Reading from the N-terminus, the 1032-residue chain is tRNA wybutosine-synthesizing protein 4 (1032 aa).

Residues Arg69, Gly95, Asp122, 169–170 (DL), and Glu196 contribute to the S-adenosyl-L-methionine site. Positions 702–726 (ESVEPNKSQSEKATSKPSAQSQNEP) are disordered. The span at 716–725 (SKPSAQSQNE) shows a compositional bias: polar residues. Residues 833–988 (PTKLPANLAV…AAGRDVYGNR (156 aa)) enclose the JmjC domain.

This sequence belongs to the methyltransferase superfamily. LCMT family.

It carries out the reaction 7-[(3S)-3-amino-3-carboxypropyl]wyosine(37) in tRNA(Phe) + S-adenosyl-L-methionine = 7-[(3S)-(3-amino-3-methoxycarbonyl)propyl]wyosine(37) in tRNA(Phe) + S-adenosyl-L-homocysteine. The enzyme catalyses 7-[(3S)-(3-amino-3-methoxycarbonyl)propyl]wyosine(37) in tRNA(Phe) + S-adenosyl-L-methionine + CO2 = wybutosine(37) in tRNA(Phe) + S-adenosyl-L-homocysteine + 2 H(+). Its pathway is tRNA modification; wybutosine-tRNA(Phe) biosynthesis. In terms of biological role, probable S-adenosyl-L-methionine-dependent methyltransferase that acts as a component of the wybutosine biosynthesis pathway. Wybutosine is a hyper modified guanosine with a tricyclic base found at the 3'-position adjacent to the anticodon of eukaryotic phenylalanine tRNA. May methylate the carboxyl group of leucine residues to form alpha-leucine ester residues. This is tRNA wybutosine-synthesizing protein 4 (ppm2) from Aspergillus oryzae (strain ATCC 42149 / RIB 40) (Yellow koji mold).